The sequence spans 124 residues: Large ribosomal subunit protein uL22 (124 aa).

Belongs to the universal ribosomal protein uL22 family. In terms of assembly, part of the 50S ribosomal subunit.

Functionally, this protein binds specifically to 23S rRNA; its binding is stimulated by other ribosomal proteins, e.g. L4, L17, and L20. It is important during the early stages of 50S assembly. It makes multiple contacts with different domains of the 23S rRNA in the assembled 50S subunit and ribosome. The globular domain of the protein is located near the polypeptide exit tunnel on the outside of the subunit, while an extended beta-hairpin is found that lines the wall of the exit tunnel in the center of the 70S ribosome. The protein is Large ribosomal subunit protein uL22 of Buchnera aphidicola subsp. Cinara cedri (strain Cc).